The primary structure comprises 1258 residues: Non-secreted LysM effector LysM19 (1258 aa).

The interval 148–168 is disordered; it reads VTQSLPNISSHEKRDDHEGNS. Residues 157-168 show a composition bias toward basic and acidic residues; it reads SHEKRDDHEGNS. LysM domains follow at residues 1028-1073 and 1179-1227; these read IVYT…SICL and RWHV…AYCT.

This sequence belongs to the secreted LysM effector family.

In terms of biological role, non-secreted LysM effector that might be involved in manipulation of host defenses for successful infection. This is Non-secreted LysM effector LysM19 from Penicillium expansum (Blue mold rot fungus).